A 205-amino-acid chain; its full sequence is uncharacterized protein (205 aa).

The signal sequence occupies residues 1–19 (MKTLCVLSIFLALLGGLCT). Low complexity predominate over residues 40-133 (VSSVASTSTP…PKTSKNNPKT (94 aa)). The tract at residues 40 to 135 (VSSVASTSTP…TSKNNPKTQE (96 aa)) is disordered. A helical membrane pass occupies residues 147–167 (GILYLFILLLIIFVIILICFI).

The protein localises to the host membrane. This is an uncharacterized protein from Equine herpesvirus 2 (strain 86/87) (EHV-2).